The chain runs to 371 residues: Phospho-N-acetylmuramoyl-pentapeptide-transferase (371 aa).

The next 11 helical transmembrane spans lie at 21-41 (NHILVLFGLISITCVFSDFYY), 46-66 (LTIPFIITTLVSSIITFIGIP), 92-112 (PTMGGIFFIPIGIIVSNILYF), 119-139 (IILTLSFVIIFFMFIGFIDDF), 156-176 (ILLQSLISLIFILICASNNLI), 182-202 (IANKVFNIGNLIYPLGIFVLL), 216-236 (GLLSGCSVLIFTGLAISILIE), 241-261 (NSTLAPLCIAMAGACMGFLFL), 268-288 (LFMGDSGSLAIGASLGGIALI), 296-316 (LIMGGILAAESISVIIQVSIF), and 349-369 (IVSSFWLITLFLVIINLIFLI).

It belongs to the glycosyltransferase 4 family. MraY subfamily. Mg(2+) is required as a cofactor.

The protein localises to the cell inner membrane. It carries out the reaction UDP-N-acetyl-alpha-D-muramoyl-L-alanyl-gamma-D-glutamyl-meso-2,6-diaminopimeloyl-D-alanyl-D-alanine + di-trans,octa-cis-undecaprenyl phosphate = di-trans,octa-cis-undecaprenyl diphospho-N-acetyl-alpha-D-muramoyl-L-alanyl-D-glutamyl-meso-2,6-diaminopimeloyl-D-alanyl-D-alanine + UMP. The protein operates within cell wall biogenesis; peptidoglycan biosynthesis. In terms of biological role, catalyzes the initial step of the lipid cycle reactions in the biosynthesis of the cell wall peptidoglycan: transfers peptidoglycan precursor phospho-MurNAc-pentapeptide from UDP-MurNAc-pentapeptide onto the lipid carrier undecaprenyl phosphate, yielding undecaprenyl-pyrophosphoryl-MurNAc-pentapeptide, known as lipid I. In Prochlorococcus marinus (strain NATL2A), this protein is Phospho-N-acetylmuramoyl-pentapeptide-transferase.